The chain runs to 234 residues: Orotate phosphoribosyltransferase (234 aa).

K30 serves as a coordination point for 5-phospho-alpha-D-ribose 1-diphosphate. Orotate is bound at residue 38 to 39 (FF). Residues 76–77 (YK), R103, K104, K107, H109, and 128–136 (DDVITAGTA) each bind 5-phospho-alpha-D-ribose 1-diphosphate. T132 and R160 together coordinate orotate.

The protein belongs to the purine/pyrimidine phosphoribosyltransferase family. PyrE subfamily. In terms of assembly, homodimer. Mg(2+) serves as cofactor.

The enzyme catalyses orotidine 5'-phosphate + diphosphate = orotate + 5-phospho-alpha-D-ribose 1-diphosphate. Its pathway is pyrimidine metabolism; UMP biosynthesis via de novo pathway; UMP from orotate: step 1/2. Its function is as follows. Catalyzes the transfer of a ribosyl phosphate group from 5-phosphoribose 1-diphosphate to orotate, leading to the formation of orotidine monophosphate (OMP). The protein is Orotate phosphoribosyltransferase of Chromohalobacter salexigens (strain ATCC BAA-138 / DSM 3043 / CIP 106854 / NCIMB 13768 / 1H11).